Reading from the N-terminus, the 670-residue chain is DNA ligase (670 aa).

NAD(+) is bound by residues 32–36 (DSEYD), 81–82 (SL), and glutamate 114. The N6-AMP-lysine intermediate role is filled by lysine 116. Arginine 137, glutamate 174, lysine 291, and lysine 315 together coordinate NAD(+). Residues cysteine 409, cysteine 412, cysteine 427, and cysteine 433 each contribute to the Zn(2+) site. The BRCT domain maps to 592 to 670 (ASENLFKDKT…EEEFLAQITR (79 aa)).

It belongs to the NAD-dependent DNA ligase family. LigA subfamily. Requires Mg(2+) as cofactor. Mn(2+) is required as a cofactor.

It carries out the reaction NAD(+) + (deoxyribonucleotide)n-3'-hydroxyl + 5'-phospho-(deoxyribonucleotide)m = (deoxyribonucleotide)n+m + AMP + beta-nicotinamide D-nucleotide.. Functionally, DNA ligase that catalyzes the formation of phosphodiester linkages between 5'-phosphoryl and 3'-hydroxyl groups in double-stranded DNA using NAD as a coenzyme and as the energy source for the reaction. It is essential for DNA replication and repair of damaged DNA. This chain is DNA ligase, found in Haemophilus influenzae (strain 86-028NP).